A 275-amino-acid polypeptide reads, in one-letter code: Pantothenate synthetase (275 aa).

Methionine 26–histidine 33 lines the ATP pocket. Histidine 33 (proton donor) is an active-site residue. Glutamine 57 contacts (R)-pantoate. Beta-alanine is bound at residue glutamine 57. Glycine 144–aspartate 147 contacts ATP. Glutamine 150 provides a ligand contact to (R)-pantoate. ATP contacts are provided by residues valine 173 and leucine 181–arginine 184.

It belongs to the pantothenate synthetase family. In terms of assembly, homodimer.

Its subcellular location is the cytoplasm. The catalysed reaction is (R)-pantoate + beta-alanine + ATP = (R)-pantothenate + AMP + diphosphate + H(+). It participates in cofactor biosynthesis; (R)-pantothenate biosynthesis; (R)-pantothenate from (R)-pantoate and beta-alanine: step 1/1. Its function is as follows. Catalyzes the condensation of pantoate with beta-alanine in an ATP-dependent reaction via a pantoyl-adenylate intermediate. The chain is Pantothenate synthetase from Azoarcus sp. (strain BH72).